Here is a 130-residue protein sequence, read N- to C-terminus: Small ribosomal subunit protein uS9 (130 aa).

Belongs to the universal ribosomal protein uS9 family.

In Burkholderia cenocepacia (strain HI2424), this protein is Small ribosomal subunit protein uS9.